Consider the following 269-residue polypeptide: Orotidine 5'-phosphate decarboxylase (269 aa).

Lys-92 functions as the Proton donor in the catalytic mechanism.

It belongs to the OMP decarboxylase family. Type 2 subfamily.

The enzyme catalyses orotidine 5'-phosphate + H(+) = UMP + CO2. It participates in pyrimidine metabolism; UMP biosynthesis via de novo pathway; UMP from orotate: step 2/2. This chain is Orotidine 5'-phosphate decarboxylase, found in Natronomonas pharaonis (strain ATCC 35678 / DSM 2160 / CIP 103997 / JCM 8858 / NBRC 14720 / NCIMB 2260 / Gabara) (Halobacterium pharaonis).